Consider the following 429-residue polypeptide: Queuine tRNA-ribosyltransferase accessory subunit 2 (429 aa).

Residues C330, C332, C335, and H361 each contribute to the Zn(2+) site.

It belongs to the queuine tRNA-ribosyltransferase family. QTRT2 subfamily. As to quaternary structure, heterodimer of a catalytic subunit and an accessory subunit. Zn(2+) is required as a cofactor.

The protein localises to the cytoplasm. Its function is as follows. Non-catalytic subunit of the queuine tRNA-ribosyltransferase (TGT) that catalyzes the base-exchange of a guanine (G) residue with queuine (Q) at position 34 (anticodon wobble position) in tRNAs with GU(N) anticodons (tRNA-Asp, -Asn, -His and -Tyr), resulting in the hypermodified nucleoside queuosine (7-(((4,5-cis-dihydroxy-2-cyclopenten-1-yl)amino)methyl)-7-deazaguanosine). This chain is Queuine tRNA-ribosyltransferase accessory subunit 2, found in Culex quinquefasciatus (Southern house mosquito).